Here is a 158-residue protein sequence, read N- to C-terminus: 2-C-methyl-D-erythritol 2,4-cyclodiphosphate synthase (158 aa).

2 residues coordinate a divalent metal cation: aspartate 9 and histidine 11. 4-CDP-2-C-methyl-D-erythritol 2-phosphate is bound by residues aspartate 9 to histidine 11 and histidine 35 to serine 36. Histidine 43 is a binding site for a divalent metal cation. Residues aspartate 57 to glycine 59, phenylalanine 62 to aspartate 66, alanine 101 to alanine 107, threonine 133 to glutamate 136, phenylalanine 140, and arginine 143 each bind 4-CDP-2-C-methyl-D-erythritol 2-phosphate.

Belongs to the IspF family. In terms of assembly, homotrimer. A divalent metal cation is required as a cofactor.

The enzyme catalyses 4-CDP-2-C-methyl-D-erythritol 2-phosphate = 2-C-methyl-D-erythritol 2,4-cyclic diphosphate + CMP. It functions in the pathway isoprenoid biosynthesis; isopentenyl diphosphate biosynthesis via DXP pathway; isopentenyl diphosphate from 1-deoxy-D-xylulose 5-phosphate: step 4/6. Its function is as follows. Involved in the biosynthesis of isopentenyl diphosphate (IPP) and dimethylallyl diphosphate (DMAPP), two major building blocks of isoprenoid compounds. Catalyzes the conversion of 4-diphosphocytidyl-2-C-methyl-D-erythritol 2-phosphate (CDP-ME2P) to 2-C-methyl-D-erythritol 2,4-cyclodiphosphate (ME-CPP) with a corresponding release of cytidine 5-monophosphate (CMP). The polypeptide is 2-C-methyl-D-erythritol 2,4-cyclodiphosphate synthase (Lysinibacillus sphaericus (strain C3-41)).